Here is a 163-residue protein sequence, read N- to C-terminus: MEFVFYACSLIAVISTLLVIIQKNAVYSLLYLIISLLSISGIFFIFGAFFAGALEVVIYAGAIIVLFVFVIMMLNLGKKNDLQEKKYLNPIFWIGPSFLSLILFLLMTYAIFFVKDKQIYFSLIDVKEVGINLFGPYLLLVELSSLLLLSALVVVFHIGKEKK.

5 helical membrane passes run 1–21, 30–50, 54–74, 94–114, and 138–158; these read MEFVFYACSLIAVISTLLVII, LYLIISLLSISGIFFIFGAFF, LEVVIYAGAIIVLFVFVIMML, IGPSFLSLILFLLMTYAIFFV, and LLLVELSSLLLLSALVVVFHI.

It belongs to the complex I subunit 6 family. In terms of assembly, composed of 13 different subunits. Subunits NuoA, H, J, K, L, M, N constitute the membrane sector of the complex.

The protein resides in the cell membrane. The enzyme catalyses a quinone + NADH + 5 H(+)(in) = a quinol + NAD(+) + 4 H(+)(out). NDH-1 shuttles electrons from NADH, via FMN and iron-sulfur (Fe-S) centers, to quinones in the respiratory chain. Couples the redox reaction to proton translocation (for every two electrons transferred, four hydrogen ions are translocated across the cytoplasmic membrane), and thus conserves the redox energy in a proton gradient. In Buchnera aphidicola subsp. Schizaphis graminum (strain Sg), this protein is NADH-quinone oxidoreductase subunit J (nuoJ).